The sequence spans 121 residues: Cytochrome c2 iso-2 (121 aa).

Heme c is bound by residues Cys-15, Cys-18, His-19, and Met-98.

It belongs to the cytochrome c family. Post-translationally, binds 1 heme c group covalently per subunit.

Cytochrome c2 is found mainly in purple, non-sulfur, photosynthetic bacteria where it functions as the electron donor to the oxidized bacteriochlorophyll in the photophosphorylation pathway. However, it may also have a role in the respiratory chain and is found in some non-photosynthetic bacteria. In Rhodospirillum centenum (Rhodocista centenaria), this protein is Cytochrome c2 iso-2.